We begin with the raw amino-acid sequence, 238 residues long: 7-cyano-7-deazaguanine synthase (238 aa).

14–24 (FSGGQDSTTCL) lines the ATP pocket. Cys-195, Cys-204, Cys-207, and Cys-210 together coordinate Zn(2+).

It belongs to the QueC family. Requires Zn(2+) as cofactor.

It carries out the reaction 7-carboxy-7-deazaguanine + NH4(+) + ATP = 7-cyano-7-deazaguanine + ADP + phosphate + H2O + H(+). It participates in purine metabolism; 7-cyano-7-deazaguanine biosynthesis. In terms of biological role, catalyzes the ATP-dependent conversion of 7-carboxy-7-deazaguanine (CDG) to 7-cyano-7-deazaguanine (preQ(0)). This Baumannia cicadellinicola subsp. Homalodisca coagulata protein is 7-cyano-7-deazaguanine synthase.